Consider the following 182-residue polypeptide: uncharacterized protein (182 aa).

One can recognise an N-acetyltransferase domain in the interval 55-182; the sequence is VNLHDLEKLC…GVKGMFWYPL (128 aa).

Belongs to the acetyltransferase family. Ycf52 subfamily.

It is found in the plastid. The protein resides in the chloroplast. This is an uncharacterized protein from Gracilaria tenuistipitata var. liui (Red alga).